We begin with the raw amino-acid sequence, 170 residues long: Cathelicidin antimicrobial peptide (170 aa).

Positions 1 to 30 (MKTQRDGHSLGGWSLMLLLLGLLMPLAIVA) are cleaved as a signal peptide. The propeptide at 31–131 (QVLSYKEAVL…DISCDKDNRR (101 aa)) is cathelin-like domain (CLD). Disulfide bonds link Cys-86–Cys-97 and Cys-108–Cys-125. The segment at 150 to 162 (FKRIVQRIKDFLQ) is active core.

The protein belongs to the cathelicidin family. Monomer, homodimer or homotrimer (in vitro). Oligomerizes as tetra- or hexamer in solution (in vitro). Proteolytically cleaved by proteinase PRTN3 into antibacterial peptide LL-37. Proteolytically cleaved by cathepsin CTSG and neutrophil elastase ELANE. In terms of processing, resistant to proteolytic degradation in solution, and when bound to both zwitterionic (mimicking mammalian membranes) and negatively charged membranes (mimicking bacterial membranes). Post-translationally, after secretion onto the skin surface, the CAMP gene product is processed by a serine protease-dependent mechanism into multiple novel antimicrobial peptides distinct from and shorter than cathelicidin LL-37. These peptides show enhanced antimicrobial action, acquiring the ability to kill skin pathogens such as S.aureus, E.coli and C.albicans. These peptides have lost the ability to stimulate CXCL8/IL8 release from keratinocytes. The peptides act synergistically, killing bacteria at lower concentrations when present together, and maintain activity at increased salt condition.

It is found in the secreted. The protein localises to the vesicle. Its function is as follows. Antimicrobial protein that is an integral component of the innate immune system. Binds to bacterial lipopolysaccharides (LPS). Acts via neutrophil N-formyl peptide receptors to enhance the release of CXCL2. Postsecretory processing generates multiple cathelicidin antimicrobial peptides with various lengths which act as a topical antimicrobial defense in sweat on skin. The unprocessed precursor form, cathelicidin antimicrobial peptide, inhibits the growth of Gram-negative E.coli and E.aerogenes with efficiencies comparable to that of the mature peptide LL-37 (in vitro). Antimicrobial peptide that is an integral component of the innate immune system. Binds to bacterial lipopolysaccharides (LPS). Causes membrane permeabilization by forming transmembrane pores (in vitro). Causes lysis of E.coli. Exhibits antimicrobial activity against Gram-negative bacteria such as P.aeruginosa, S.typhimurium, E.aerogenes, E.coli and P.syringae, Gram-positive bacteria such as L.monocytogenes, S.epidermidis, S.pyogenes and S.aureus, as well as vancomycin-resistant enterococci (in vitro). Exhibits antimicrobial activity against methicillin-resistant S.aureus, P.mirabilis, and C.albicans in low-salt media, but not in media containing 100 mM NaCl (in vitro). Forms chiral supramolecular assemblies with quinolone signal (PQS) molecules of P.aeruginosa, which may lead to interference of bacterial quorum signaling and perturbance of bacterial biofilm formation. May form supramolecular fiber-like assemblies on bacterial membranes. Induces cytokine and chemokine producation as well as TNF/TNFA and CSF2/GMCSF production in normal human keratinocytes. Exhibits hemolytic activity against red blood cells. In terms of biological role, exhibits antimicrobial activity against E.coli and B.megaterium (in vitro). The sequence is that of Cathelicidin antimicrobial peptide from Hylobates moloch (Silvery gibbon).